The sequence spans 29 residues: Small ribosomal subunit protein uS7 (29 aa).

Positions 1 to 29 are disordered; the sequence is ELIGAANRDTKSFSINRKDAKERVAKAAR. Over residues 8–29 the composition is skewed to basic and acidic residues; that stretch reads RDTKSFSINRKDAKERVAKAAR.

It belongs to the universal ribosomal protein uS7 family. As to quaternary structure, part of the 30S ribosomal subunit.

Its function is as follows. One of the primary rRNA binding proteins, it binds directly to 16S rRNA where it nucleates assembly of the head domain of the 30S subunit. Is located at the subunit interface close to the decoding center. This Methanosarcina thermophila protein is Small ribosomal subunit protein uS7 (rps7).